The chain runs to 475 residues: Ankyrin repeat, SAM and basic leucine zipper domain-containing protein 1 (475 aa).

The interval 1 to 25 (MAAGALRGLPVAGGGESSESEDDGW) is disordered. 3 positions are modified to phosphoserine: serine 17, serine 18, and serine 20. ANK repeat units lie at residues 45–74 (EKKE…SVDS), 78–107 (YGWT…NASF), 110–144 (DKQS…DPNV), 148–177 (RLMT…EVNT), 181–210 (NGYT…NKML), and 214–243 (DGKM…PLEG). In terms of domain architecture, SAM spans 272 to 334 (SYTAFGDLEV…KILAALKELQ (63 aa)).

Interacts with DDX4, PIWIL1, RANBP9 and TDRD1.

The protein resides in the cytoplasm. Plays a central role during spermatogenesis by repressing transposable elements and preventing their mobilization, which is essential for the germline integrity. Acts via the piRNA metabolic process, which mediates the repression of transposable elements during meiosis by forming complexes composed of piRNAs and Piwi proteins and governs the methylation and subsequent repression of transposons. Its association with pi-bodies suggests a participation in the primary piRNAs metabolic process. Required prior to the pachytene stage to facilitate the production of multiple types of piRNAs, including those associated with repeats involved in the regulation of retrotransposons. May act by mediating protein-protein interactions during germ cell maturation. The polypeptide is Ankyrin repeat, SAM and basic leucine zipper domain-containing protein 1 (ASZ1) (Nomascus leucogenys (Northern white-cheeked gibbon)).